A 432-amino-acid chain; its full sequence is Bifunctional protein GlmU (432 aa).

Residues 1–224 are pyrophosphorylase; it reads MSEISVIILA…EENFMGINDK (224 aa). Residues 9 to 12, Lys-23, and 82 to 83 contribute to the UDP-N-acetyl-alpha-D-glucosamine site; these read LAAG and GT. Position 103 (Asp-103) interacts with Mg(2+). Gly-136, Glu-150, Asn-165, and Asn-222 together coordinate UDP-N-acetyl-alpha-D-glucosamine. Asn-222 serves as a coordination point for Mg(2+). The interval 225-245 is linker; sequence FALSKAETIIQNEIKENLMKN. Residues 246–432 form an N-acetyltransferase region; it reads GVLMRLPESI…FFAKFFKEIK (187 aa). UDP-N-acetyl-alpha-D-glucosamine contacts are provided by Arg-309 and Lys-326. Residue His-337 is the Proton acceptor of the active site. UDP-N-acetyl-alpha-D-glucosamine is bound by residues Tyr-340 and Asn-351. Acetyl-CoA-binding positions include 360-361, Ser-379, Ala-397, and Arg-414; that span reads NY.

It in the N-terminal section; belongs to the N-acetylglucosamine-1-phosphate uridyltransferase family. The protein in the C-terminal section; belongs to the transferase hexapeptide repeat family. In terms of assembly, homotrimer. Mg(2+) serves as cofactor.

It is found in the cytoplasm. It carries out the reaction alpha-D-glucosamine 1-phosphate + acetyl-CoA = N-acetyl-alpha-D-glucosamine 1-phosphate + CoA + H(+). It catalyses the reaction N-acetyl-alpha-D-glucosamine 1-phosphate + UTP + H(+) = UDP-N-acetyl-alpha-D-glucosamine + diphosphate. It functions in the pathway nucleotide-sugar biosynthesis; UDP-N-acetyl-alpha-D-glucosamine biosynthesis; N-acetyl-alpha-D-glucosamine 1-phosphate from alpha-D-glucosamine 6-phosphate (route II): step 2/2. The protein operates within nucleotide-sugar biosynthesis; UDP-N-acetyl-alpha-D-glucosamine biosynthesis; UDP-N-acetyl-alpha-D-glucosamine from N-acetyl-alpha-D-glucosamine 1-phosphate: step 1/1. It participates in bacterial outer membrane biogenesis; LPS lipid A biosynthesis. Functionally, catalyzes the last two sequential reactions in the de novo biosynthetic pathway for UDP-N-acetylglucosamine (UDP-GlcNAc). The C-terminal domain catalyzes the transfer of acetyl group from acetyl coenzyme A to glucosamine-1-phosphate (GlcN-1-P) to produce N-acetylglucosamine-1-phosphate (GlcNAc-1-P), which is converted into UDP-GlcNAc by the transfer of uridine 5-monophosphate (from uridine 5-triphosphate), a reaction catalyzed by the N-terminal domain. In Campylobacter hominis (strain ATCC BAA-381 / DSM 21671 / CCUG 45161 / LMG 19568 / NCTC 13146 / CH001A), this protein is Bifunctional protein GlmU.